The primary structure comprises 837 residues: Tuftelin-interacting protein 11 (837 aa).

2 stretches are compositionally biased toward basic and acidic residues: residues 1–13 (MSLS…GEGR) and 53–64 (VWAERDSDDERP). 3 disordered regions span residues 1–21 (MSLS…DDER), 53–72 (VWAE…KRAR), and 85–133 (LKKG…KGFA). The tract at residues 1–50 (MSLSHLYRDGEGRIDDDDDERENFEITDWDLQNEFNPNRQRHWQTKEEAT) is required for interaction with DHX15. Ser-2, Ser-59, and Ser-98 each carry phosphoserine. Positions 91-102 (EEAELEDSDDEE) are enriched in acidic residues. Positions 103–116 (KPVKQDDFPKDFGP) are enriched in basic and acidic residues. Residue Ser-144 is modified to Phosphoserine. A G-patch domain is found at 149–195 (TKGIGQKLLQKMGYVPGRGLGKNAQGIINPIEAKQRKGKGAVGAYGS). A disordered region spans residues 179–236 (IEAKQRKGKGAVGAYGSERTTQSMQDFPVVDSEEEAEEEFQKELSQWRKDPSGSKKKP). Ser-210 is modified (phosphoserine). Residues 217–231 (EFQKELSQWRKDPSG) are compositionally biased toward basic and acidic residues. Positions 700–705 (VKDKFN) match the Nuclear localization signal motif. Positions 710-734 (IMNRAVSSNVGAYMQPGARENIAYL) are required for nuclear speckle localization.

This sequence belongs to the TFP11/STIP family. Identified in the spliceosome C complex. Found in the Intron Large (IL) complex, a post-mRNA release spliceosomal complex containing the excised intron, U2, U5 and U6 snRNPs, and splicing factors. Interacts with TUFT1. Interacts with DHX15; indicative for a recruitment of DHX15 to the IL complex. Interacts with GCFC2.

Its subcellular location is the cytoplasm. It is found in the nucleus. Its function is as follows. Involved in pre-mRNA splicing, specifically in spliceosome disassembly during late-stage splicing events. Intron turnover seems to proceed through reactions in two lariat-intron associated complexes termed Intron Large (IL) and Intron Small (IS). In cooperation with DHX15 seems to mediate the transition of the U2, U5 and U6 snRNP-containing IL complex to the snRNP-free IS complex leading to efficient debranching and turnover of excised introns. May play a role in the differentiation of ameloblasts and odontoblasts or in the forming of the enamel extracellular matrix. This Pongo abelii (Sumatran orangutan) protein is Tuftelin-interacting protein 11 (TFIP11).